A 401-amino-acid polypeptide reads, in one-letter code: Argininosuccinate synthase (401 aa).

Residues 7 to 15 and Ala-34 contribute to the ATP site; that span reads AYSGGLDTS. Positions 85 and 90 each coordinate L-citrulline. Residue Gly-115 coordinates ATP. 3 residues coordinate L-aspartate: Thr-117, Asn-121, and Asp-122. Asn-121 provides a ligand contact to L-citrulline. Arg-125, Ser-174, Ser-183, Glu-259, and Tyr-271 together coordinate L-citrulline.

It belongs to the argininosuccinate synthase family. Type 1 subfamily. In terms of assembly, homotetramer.

The protein resides in the cytoplasm. The catalysed reaction is L-citrulline + L-aspartate + ATP = 2-(N(omega)-L-arginino)succinate + AMP + diphosphate + H(+). Its pathway is amino-acid biosynthesis; L-arginine biosynthesis; L-arginine from L-ornithine and carbamoyl phosphate: step 2/3. The sequence is that of Argininosuccinate synthase from Pelotomaculum thermopropionicum (strain DSM 13744 / JCM 10971 / SI).